A 320-amino-acid chain; its full sequence is (+)-corvol ether B synthase/(+)-corvol ether A synthase ((2E,6E)-farnesyl diphosphate cyclizing) (320 aa).

Mg(2+)-binding residues include D78 and D83. A DDXXXD motif motif is present at residues 78-83 (DDLFVD). Residue R171 coordinates substrate. Mg(2+) is bound by residues N217, S221, and E225.

This sequence belongs to the terpene synthase family. It depends on Mg(2+) as a cofactor.

The enzyme catalyses (2E,6E)-farnesyl diphosphate + H2O = (+)-corvol ether B + diphosphate. It catalyses the reaction (2E,6E)-farnesyl diphosphate + H2O = (+)-corvol ether A + diphosphate. It participates in secondary metabolite biosynthesis; terpenoid biosynthesis. Functionally, catalyzes the conversion of (2E,6E)-farnesyl diphosphate (FPP) into (+)-corvol ether A and (+)-corvol ether B via a 1,10-cyclization, which requires isomerization of FPP to nerolidyl diphosphate (NPP) and then abstraction of the pyrophosphate from intermediate NPP leading to a (E,Z)-germacradienyl (helminthogermacradienyl) cation. The preferred substrate is (2E,6E)-farnesyl diphosphate (FPP), however geranyl diphosphate (GPP) is also able to produce small amounts of several acyclic and cyclic monoterpenes, with linalool as the main product. This chain is (+)-corvol ether B synthase/(+)-corvol ether A synthase ((2E,6E)-farnesyl diphosphate cyclizing), found in Kitasatospora setae (strain ATCC 33774 / DSM 43861 / JCM 3304 / KCC A-0304 / NBRC 14216 / KM-6054) (Streptomyces setae).